Here is a 772-residue protein sequence, read N- to C-terminus: Chondroitin sulfate glucuronyltransferase (772 aa).

At 1–6 the chain is on the cytoplasmic side; that stretch reads MRLSSL. A helical; Signal-anchor for type II membrane protein membrane pass occupies residues 7 to 29; it reads LALLRPALPLILGLSLGCSLSLL. Residues 30–772 are Lumenal-facing; sequence RVSWIQGEGE…LFEQEQANST (743 aa). Asparagine 121 and asparagine 342 each carry an N-linked (GlcNAc...) asparagine glycan. A disordered region spans residues 629–662; that stretch reads ALSPQRSPPGPPGAGPDPPSPPGADPSRGAPIGG. Pro residues predominate over residues 634-652; sequence RSPPGPPGAGPDPPSPPGA.

Belongs to the chondroitin N-acetylgalactosaminyltransferase family. In terms of tissue distribution, ubiquitous. Highly expressed in placenta, small intestine and pancreas.

The protein resides in the golgi apparatus. Its subcellular location is the golgi stack membrane. It catalyses the reaction 3-O-(beta-D-GalNAc-(1-&gt;4)-beta-D-GlcA-(1-&gt;3)-beta-D-Gal-(1-&gt;3)-beta-D-Gal-(1-&gt;4)-beta-D-Xyl)-L-seryl-[protein] + UDP-alpha-D-glucuronate = 3-O-(beta-D-GlcA-(1-&gt;3)-beta-D-GalNAc-(1-&gt;4)-beta-D-GlcA-(1-&gt;3)-beta-D-Gal-(1-&gt;3)-beta-D-Gal-(1-&gt;4)-beta-D-Xyl)-L-seryl-[protein] + UDP + H(+). The catalysed reaction is 3-O-{[beta-D-GalNAc-(1-&gt;4)-beta-D-GlcA-(1-&gt;3)](n)-beta-D-GalNAc-(1-&gt;4)-beta-D-GlcA-(1-&gt;3)-beta-D-Gal-(1-&gt;3)-beta-D-Gal-(1-&gt;4)-beta-D-Xyl}-L-seryl-[protein] + UDP-alpha-D-glucuronate = 3-O-{beta-D-GlcA-(1-&gt;3)-[beta-D-GalNAc-(1-&gt;4)-beta-D-GlcA-(1-&gt;3)](n)-beta-D-GalNAc-(1-&gt;4)-beta-D-GlcA-(1-&gt;3)-beta-D-Gal-(1-&gt;3)-beta-D-Gal-(1-&gt;4)-beta-D-Xyl}-L-seryl-[protein] + UDP + H(+). Functionally, transfers glucuronic acid (GlcUA) from UDP-GlcUA to N-acetylgalactosamine residues on the non-reducing end of the elongating chondroitin polymer. Has no N-acetylgalactosaminyltransferase activity. The sequence is that of Chondroitin sulfate glucuronyltransferase (CHPF2) from Homo sapiens (Human).